Reading from the N-terminus, the 132-residue chain is MSWQAYVDDHLMCDVGDGNTPASAAIIGHDGSVWAQSANFPQLKPEEVTGIMNDFNEAGFLAPTGLFLGGTKYMVIQGESGAVIRGKKGSGGATLKKTGQAIVIGIYDEPMTPGQCNLVVERLGDYLLEQGL.

Belongs to the profilin family. Occurs in many kinds of cells as a complex with monomeric actin in a 1:1 ratio.

Its subcellular location is the cytoplasm. It localises to the cytoskeleton. Its function is as follows. Binds to actin and affects the structure of the cytoskeleton. At high concentrations, profilin prevents the polymerization of actin, whereas it enhances it at low concentrations. By binding to PIP2, it inhibits the formation of IP3 and DG. This chain is Profilin-1 (PRO1), found in Parietaria judaica (Pellitory-of-the-wall).